The primary structure comprises 802 residues: Cullin-4 (802 aa).

Low complexity-rich tracts occupy residues 1–33 and 656–676; these read MNFN…NNNN and STSS…ASGS. Disordered regions lie at residues 1-43 and 656-686; these read MNFN…SLAG and STSS…GGAT. Residues 734 to 794 form the Cullin neddylation domain; the sequence is DRQYQVDAAI…KEYLCRDPEN (61 aa). Residue lysine 748 forms a Glycyl lysine isopeptide (Lys-Gly) (interchain with G-Cter in NEDD8) linkage.

It belongs to the cullin family. Neddylated. Deneddylated via its interaction with the COP9 signalosome (CSN) complex.

Its pathway is protein modification; protein ubiquitination. Its function is as follows. Probable core component of cullin-based SCF-like E3 ubiquitin-protein ligase complexes which mediate the ubiquitination and subsequent proteasomal degradation of target proteins. The E3 ubiquitin-protein ligase activity of the complex is dependent on the neddylation of the cullin subunit. The protein is Cullin-4 (culD) of Dictyostelium discoideum (Social amoeba).